Consider the following 435-residue polypeptide: GTPase Der (435 aa).

2 consecutive EngA-type G domains span residues 4-167 (KIVA…SKND) and 175-350 (TKIA…QSLS). GTP is bound by residues 10 to 17 (GRPNVGKS), 57 to 61 (DTGGI), 119 to 122 (NKYD), 181 to 188 (GRPNVGKS), 228 to 232 (DTAGI), and 293 to 296 (NKWD). The 85-residue stretch at 351–435 (VKVKTYVLNE…PINLIFRERK (85 aa)) folds into the KH-like domain.

Belongs to the TRAFAC class TrmE-Era-EngA-EngB-Septin-like GTPase superfamily. EngA (Der) GTPase family. In terms of assembly, associates with the 50S ribosomal subunit.

In terms of biological role, GTPase that plays an essential role in the late steps of ribosome biogenesis. This Mycoplasma mycoides subsp. mycoides SC (strain CCUG 32753 / NCTC 10114 / PG1) protein is GTPase Der.